A 905-amino-acid polypeptide reads, in one-letter code: MTQDQLLAGLKKDVRSLLVSSKHGLTPEHLRRDYQSMLGFPMPLRLLGFRNVLDMVKEMPEVVRLEYQLDGNIILKAIGDDTTKGIEELVSKQRDHKPKPNNRKGKPGYFNISYPRLQPVILPRRGQAKPALPAHLRSQLKQLLSHGPVRLSELESRYVAQFGKPLNVTQYGFFSISEMLSAAMDFIIMQQSRTGSQLLLRSAVTPQNQPENLMRRFSMQSTSPKQRLAGFSPKASSLPERRPEVSLDPSSVSKPEPVKEEQSFEETVFKLEEELRQQILEKGTAGTVSQELKEKLRKVVAENGNGISIHNLPTEYQRMHGEELPVSQCGFLSVTEMVGALSDTLAIQRGTDESESHWMVVEFKPIDTQPCEPELSPGDGTTSSPTGELQNPSSRAFYFSCPESAWEHEETEPLTDSQESDAELRVANKTIHQMVNLFPELMVSRVSAVPLDAVRCQKLKPPVHRKERELLPVLVEQTESPSYFYIRFSQNKEARALENMMIEMRSCYSYPDVAERYRLPDAYVRPGQVCCVAPRDMWFYRVVIHEVFSETEVKVYYVDYGDITKVERHSLRFLKACYADLPAQAVPAMLAGVRPITNIWPASAVSCFQRLCCERTLVAGVHSYQEDFLLLFLCDTNTEEDVYVHLALIQEGHAQPCSAAYGLVSEKFNPVTSYFGYDQLEDVKESLSPFSCSPDAEIDSQGNDSPSSCRTASNSESGETNLASIDVDPNLDLPPLEVINVPDVNTAAKSENVNPFEALVRKDPLFNSEWDQGWTAEDKTDETKFELDVSTEQSKPETVYTPSPVQAAVGKQQLCASPVEPKVNATTCVNPHNPVPIQINCSYPVLPGVPVYPVKPPISQFMMQLLGNPVYQGPGPNTAFQHLTSPLALRPAARMSAGGQILHWS.

HTH OST-type domains are found at residues 6 to 79 (LLAG…KAIG) and 128 to 204 (AKPA…RSAV). The segment at 219 to 264 (MQSTSPKQRLAGFSPKASSLPERRPEVSLDPSSVSKPEPVKEEQSF) is disordered. In terms of domain architecture, HTH OST-type 3 spans 288 to 364 (VSQELKEKLR…ESHWMVVEFK (77 aa)). The tract at residues 368–393 (TQPCEPELSPGDGTTSSPTGELQNPS) is disordered. A compositionally biased stretch (polar residues) spans 379 to 393 (DGTTSSPTGELQNPS). Positions 523–581 (YVRPGQVCCVAPRDMWFYRVVIHEVFSETEVKVYYVDYGDITKVERHSLRFLKACYADL) constitute a Tudor domain. The segment at 694–728 (PDAEIDSQGNDSPSSCRTASNSESGETNLASIDVD) is disordered. Polar residues predominate over residues 700–723 (SQGNDSPSSCRTASNSESGETNLA).

This sequence belongs to the TDRD5 family.

It localises to the cytoplasm. Its function is as follows. Required during spermiogenesis to participate in the repression transposable elements and prevent their mobilization, which is essential for the germline integrity. Probably acts via the piRNA metabolic process, which mediates the repression of transposable elements during meiosis by forming complexes composed of piRNAs and Piwi proteins and govern the methylation and subsequent repression of transposons. The polypeptide is Tudor domain-containing protein 5 (tdrd5) (Danio rerio (Zebrafish)).